A 683-amino-acid polypeptide reads, in one-letter code: DNA ligase (683 aa).

Residues 36-40, 85-86, and Glu-119 contribute to the NAD(+) site; these read DAEYD and SL. Lys-121 acts as the N6-AMP-lysine intermediate in catalysis. NAD(+) is bound by residues Arg-142, Glu-179, Lys-295, and Lys-319. The Zn(2+) site is built by Cys-413, Cys-416, Cys-431, and Cys-437. In terms of domain architecture, BRCT spans 596–683; that stretch reads TETLPLSGQT…EHQAHLGGEA (88 aa).

It belongs to the NAD-dependent DNA ligase family. LigA subfamily. It depends on Mg(2+) as a cofactor. Mn(2+) serves as cofactor.

The enzyme catalyses NAD(+) + (deoxyribonucleotide)n-3'-hydroxyl + 5'-phospho-(deoxyribonucleotide)m = (deoxyribonucleotide)n+m + AMP + beta-nicotinamide D-nucleotide.. Its function is as follows. DNA ligase that catalyzes the formation of phosphodiester linkages between 5'-phosphoryl and 3'-hydroxyl groups in double-stranded DNA using NAD as a coenzyme and as the energy source for the reaction. It is essential for DNA replication and repair of damaged DNA. This Hahella chejuensis (strain KCTC 2396) protein is DNA ligase.